Reading from the N-terminus, the 218-residue chain is Molybdenum cofactor guanylyltransferase (218 aa).

Residues 16–18, Lys-28, Asn-56, Asp-74, and Asp-109 each bind GTP; that span reads LAG. Asp-109 provides a ligand contact to Mg(2+).

It belongs to the MobA family. In terms of assembly, monomer. Requires Mg(2+) as cofactor.

The protein localises to the cytoplasm. It carries out the reaction Mo-molybdopterin + GTP + H(+) = Mo-molybdopterin guanine dinucleotide + diphosphate. Transfers a GMP moiety from GTP to Mo-molybdopterin (Mo-MPT) cofactor (Moco or molybdenum cofactor) to form Mo-molybdopterin guanine dinucleotide (Mo-MGD) cofactor. This is Molybdenum cofactor guanylyltransferase from Sinorhizobium fredii (strain NBRC 101917 / NGR234).